Reading from the N-terminus, the 362-residue chain is Porin Omp2b (362 aa).

The N-terminal stretch at 1-22 is a signal peptide; it reads MNIKSLLLGSAAALVAASGAQA.

It belongs to the alphaproteobacteria porin family. As to quaternary structure, homotrimer.

The protein localises to the cell outer membrane. Its function is as follows. Forms passive diffusion pores that allow small molecular weight hydrophilic materials across the outer membrane. This is Porin Omp2b (omp2b) from Brucella melitensis biotype 1 (strain ATCC 23456 / CCUG 17765 / NCTC 10094 / 16M).